We begin with the raw amino-acid sequence, 2474 residues long: Polyprotein P1234 (2474 aa).

The region spanning 28–259 is the Alphavirus-like MT domain; the sequence is EPRQVTPNDH…ESRKLLKSWH (232 aa). Histidine 37 functions as the For mRNA-capping enzyme nsP1 activity in the catalytic mechanism. Histidine 79, glutamate 129, cysteine 134, and cysteine 141 together coordinate Zn(2+). A membrane-binding and oligomerization region spans residues 295 to 450; sequence GLYGKTTGYA…QKVPAEFDSF (156 aa). 2 S-palmitoyl cysteine; by host lipidation sites follow: cysteine 417 and cysteine 419. The region spanning 690–842 is the (+)RNA virus helicase ATP-binding domain; it reads DLTNPPYHEF…HNICTQVYHK (153 aa). 721-728 is an a ribonucleoside 5'-triphosphate binding site; the sequence is GVPGSGKS. A (+)RNA virus helicase C-terminal domain is found at 843–991; the sequence is SISRRCTLPV…IKEWEVEHAS (149 aa). Residues 1004 to 1327 enclose the Peptidase C9 domain; it reads DTFQNKANVC…NQLNAAFVGQ (324 aa). Residues 1005–1024 form a nucleolus localization signal region; that stretch reads TFQNKANVCWAKSLVPILET. Cysteine 1013 functions as the For cysteine protease nsP2 activity in the catalytic mechanism. The Nuclear export signal signature appears at 1058 to 1067; the sequence is TRMYGVDLDS. Residue histidine 1083 is the For cysteine protease nsP2 activity of the active site. Residues 1182-1186 carry the Nuclear localization signal motif; that stretch reads PTKRV. In terms of domain architecture, Macro spans 1334 to 1493; it reads APSYRVKRMD…KIAEAIQMRT (160 aa). Residues aspartate 1343, asparagine 1357, glycine 1365, glycine 1445, valine 1446, and tyrosine 1447 each contribute to the ADP-D-ribose site. Cysteine 1595, cysteine 1597, cysteine 1620, and cysteine 1638 together coordinate Zn(2+). A disordered region spans residues 1651–1706; sequence RVSPREYKSPQETAQEVSSTTSLTHSQFDLSVDGEELPAPSDLEADAPIPEPTPDD. The interval 1659 to 1857 is HVD; it reads SPQETAQEVS…TCSDTDDELX (199 aa). Residues 1660 to 1679 show a composition bias toward polar residues; the sequence is PQETAQEVSSTTSLTHSQFD. 2 interaction with host CD2AP regions span residues 1726–1739 and 1756–1767; these read VMNT…RRRR and PMASVRFFRADL. The segment at 1745-1793 is interaction with host FHL1; that stretch reads VTCDEREGNVLPMASVRFFRADLHSIVQETAEIRDTAASLQAPLSVATE. An FGDF; binding to host G3BP1 motif is present at residues 1812 to 1815; sequence FGDF. The tract at residues 1820–1828 is interaction with host CD2AP; sequence IESLSSELL. An FGDF; binding to host G3BP1 motif is present at residues 1830–1833; sequence FGDF. The 116-residue stretch at 2228–2343 folds into the RdRp catalytic domain; sequence DAVLETDIAS…HGVVSDELMA (116 aa).

Homododecamer. The enzyme forms a membrane-associated dodecameric ring with a central channel for the exchange of between the viral replication factories and the host cytoplasm. Interacts with non-structural protein 3. Interacts with RNA-directed RNA polymerase nsP4. Interacts with protease nsP2. Interacts with itself. Interacts with host STING1; this interaction results in inhibition of cGAS-STING signaling and increased levels of palmitoylation and protein stabilization of nsP1. Interacts with host TMEM45B; this interaction leads to viral replication inhibition. As to quaternary structure, interacts with mRNA-capping enzyme nsP1. Interacts (via C-terminus) with host G3BP1; this interaction inhibits the formation of host stress granules on viral mRNAs and the nsp3-G3BP1 complexes bind viral RNAs and probably orchestrate the assembly of viral replication complexes. Interacts (via C-terminus) with host G3BP2; this interaction inhibits the formation of host stress granules on viral mRNAs and the nsp3-G3BP2 complexes bind viral RNAs and probably orchestrate the assembly of viral replication complexes. Interacts (via C-terminus) with host NAP1L1. Interacts (via C-terminus) with host NAP1L4. Interacts (via C-terminus) with host DHX9; this interaction allows the recruitment of DHX9 to the plasma membrane, where it associates with viral replication complexes and may play a role in the translation-to-replication switch. Interacts (via C-terminus) with host FHL1 (via LIM domain 1); this interaction is required for viral RNA replication. Interacts (via C-terminus) with host CD2AP; this interaction plays a role in initiation of viral replication. Interacts (via C-terminus) with host SH3KBP1; this interaction plays a role in initiation of viral replication. In terms of assembly, interacts with mRNA-capping enzyme nsP1. Interacts with protease nsP2. interacts with itself. Interacts with host TMEM45B; this interaction leads to viral replication inhibition. Interacts with RNA-directed RNA polymerase nsP4. Interacts with mRNA-capping enzyme nsP1. Interacts with KPNA1/karyopherin-alpha1; this interaction probably allows the active transport of protease nsP2 into the host nucleus. Mg(2+) is required as a cofactor. Mn(2+) serves as cofactor. Specific enzymatic cleavages in vivo yield mature proteins. The processing of the polyprotein is temporally regulated. In early stages (1.7 hpi), P1234 is first cleaved in trans through its nsP2 protease activity, releasing P123' and nsP4, which associate to form the early replication complex. At the same time, P1234 is also cut at the nsP1/nsP2 site early in infection but with lower efficiency. After replication of the viral minus-strand RNAs (4 hpi), the polyproteins are cut at the nsP1/nsP2 and nsP2/nsP3 sites very efficiently, preventing accumulation of P123' and P1234 and allowing the formation of the late replication complex. NsP3'/nsP4 site is not cleaved anymore and P34 is produced rather than nsP4. Post-translationally, specific enzymatic cleavages in vivo yield mature proteins. The processing of the polyprotein is temporally regulated. In early stages (1.7 hpi), P123 is cleaved at the nsP1/nsP2 site with low efficiency. After replication of the viral minus-strand RNAs (4 hpi), the polyproteins are cut at the nsP1/nsP2 and nsP2/nsP3 sites very efficiently, preventing accumulation of P123 and allowing the formation of the late replication complex. In terms of processing, specific enzymatic cleavages in vivo yield mature proteins. The processing of the polyprotein is temporally regulated. In early stages (1.7 hpi), P123' is cleaved at the nsP1/nsP2 site with low efficiency. After replication of the viral minus-strand RNAs (4 hpi), the polyproteins are cut at the nsP1/nsP2 and nsP2/nsP3 sites very efficiently, preventing accumulation of P123' and allowing the formation of the late replication complex. Palmitoylated by host palmitoyltransferases ZDHHC2 and ZDHHC19. Palmitoylation is increased by the interacton with host STING1. Post-translationally, phosphorylated by host on serines and threonines. In terms of processing, ubiquitinated; targets the protein for rapid degradation via the ubiquitin system. Nsp4 is present in extremely low quantities due to low frequency of translation through the amber stop-codon and the degradation by the ubiquitin pathway.

It is found in the host cytoplasmic vesicle membrane. The protein resides in the host cell membrane. It localises to the host cell projection. Its subcellular location is the host filopodium. The protein localises to the host nucleus. It is found in the host cytoplasm. The catalysed reaction is GTP + S-adenosyl-L-methionine = N(7)-methyl-GTP + S-adenosyl-L-homocysteine. It carries out the reaction N(7)-methyl-GTP + L-histidyl-[protein] = N(tele)-(N(7)-methylguanosine 5'-phospho)-L-histidyl-[protein] + diphosphate. It catalyses the reaction N(tele)-(N(7)-methylguanosine 5'-phospho)-L-histidyl-[protein] + a 5'-end diphospho-(purine-ribonucleoside) in mRNA + H(+) = a 5'-end (N(7)-methyl 5'-triphosphoguanosine)-(purine-ribonucleoside) in mRNA + L-histidyl-[protein]. The enzyme catalyses a 5'-end triphospho-ribonucleoside in mRNA + H2O = a 5'-end diphospho-ribonucleoside in mRNA + phosphate + H(+). The catalysed reaction is a ribonucleoside 5'-triphosphate + H2O = a ribonucleoside 5'-diphosphate + phosphate + H(+). It carries out the reaction ATP + H2O = ADP + phosphate + H(+). It catalyses the reaction RNA(n) + a ribonucleoside 5'-triphosphate = RNA(n+1) + diphosphate. The enzyme catalyses 4-O-(ADP-D-ribosyl)-L-aspartyl-[protein] + H2O = L-aspartyl-[protein] + ADP-D-ribose + H(+). The catalysed reaction is 5-O-(ADP-D-ribosyl)-L-glutamyl-[protein] + H2O = L-glutamyl-[protein] + ADP-D-ribose + H(+). It carries out the reaction RNA(n) + ATP = RNA(n)-3'-adenine ribonucleotide + diphosphate. It catalyses the reaction ADP-alpha-D-ribose 1''-phosphate + H2O = ADP-D-ribose + phosphate. In terms of biological role, inactive precursor of the viral replicase, which is activated by cleavages carried out by the viral protease nsP2. The early replication complex formed by the polyprotein P123 and nsP4 synthesizes minus-strand RNAs. As soon P123 is cleaved into mature proteins, the plus-strand RNAs synthesis begins. Functionally, the early replication complex formed by the polyprotein P123' and nsP4 synthesizes minus-strand RNAs. Polyprotein P123' is a short-lived polyprotein that accumulates during early stage of infection. As soon P123' is cleaved into mature proteins, the plus-strand RNAs synthesis begins. Its function is as follows. Cytoplasmic capping enzyme that catalyzes two virus-specific reactions: methyltransferase and guanylyltransferase. mRNA-capping is necessary since all viral RNAs are synthesized in the cytoplasm, and host capping enzymes are restricted to the nucleus. The enzymatic reaction involves a covalent link between 7-methyl-GMP and nsP1, whereas eukaryotic capping enzymes form a covalent complex only with GMP. nsP1 capping consists in the following reactions: GTP is first methylated into 7-methyl-GMP and then is covalently linked to nsP1 to form the m7GMp-nsP1 complex from which 7-methyl-GMP complex is transferred to the mRNA to create the cap structure. NsP1 is also needed for the initiation of the minus-strand RNAs synthesis. At the initiation of virus replication, mediates the assembly of the viral replication complex made of the non-structural proteins, the association of this complex with the inner face of the plasma membrane and the formation of membranous spherules that serve as replication complex factories. Forms the neck of these spherules with a central channel for mediating communication and the passage of RNA, nucleotides, and small proteins between the viral replication complex and the host cytoplasm. Palmitoylated nsP1 is remodeling host cell cytoskeleton, and induces filopodium-like structure formation at the surface of the host cell. In terms of biological role, multifunctional protein whose N-terminus is part of the RNA polymerase complex and displays NTPase, RNA triphosphatase and helicase activities. NTPase and RNA triphosphatase are involved in viral RNA capping and helicase keeps a check on the dsRNA replication intermediates. The C-terminus harbors a protease that specifically cleaves the polyproteins and releases the mature proteins. Required for the shutoff of minus-strand RNAs synthesis. Specifically inhibits the host IFN response by promoting the nuclear export of host STAT1. Also inhibits host transcription by inducing the rapid proteasome-dependent degradation of POLR2A, a catalytic subunit of the RNAPII complex. The resulting inhibition of cellular protein synthesis serves to ensure maximal viral gene expression and to evade host immune response. Seems to be essential for minus-strand RNAs and subgenomic 26S mRNAs synthesis. Displays mono-ADP-ribosylhydrolase activity. ADP-ribosylation is a post-translational modification that controls various processes of the host cell and the virus probably needs to revert it for optimal viral replication. Binds proteins of FXR family and sequesters them into the viral RNA replication complexes thereby inhibiting the formation of host stress granules on viral mRNAs. The nsp3'-FXR complexes bind viral RNAs and probably orchestrate the assembly of viral replication complexes, thanks to the ability of FXR family members to self-assemble and bind DNA. Functionally, seems to be essential for minus-strand RNAs and subgenomic 26S mRNAs synthesis. Displays mono-ADP-ribosylhydrolase activity. ADP-ribosylation is a post-translational modification that controls various processes of the host cell and the virus probably needs to revert it for optimal viral replication. Binds proteins of G3BP family and sequesters them into the viral RNA replication complexes thereby inhibiting the formation of host stress granules on viral mRNAs. The nsp3-G3BP complexes bind viral RNAs and probably orchestrate the assembly of viral replication complexes, thanks to the ability of G3BP family members to self-assemble and bind DNA. Its function is as follows. RNA dependent RNA polymerase. Replicates genomic and antigenomic RNA by recognizing replications specific signals. The early replication complex formed by the polyprotein P123 and nsP4 synthesizes minus-strand RNAs. The late replication complex composed of fully processed nsP1-nsP4 is responsible for the production of genomic and subgenomic plus-strand RNAs. The sequence is that of Polyprotein P1234 from Aedes aegypti (Yellowfever mosquito).